The primary structure comprises 391 residues: Carbamoyl phosphate synthase small chain (391 aa).

The tract at residues 1-187 is CPSase; the sequence is MAGVKERAVL…PLPYAWPTLK (187 aa). Residues Ser-50, Gly-239, and Gly-241 each contribute to the L-glutamine site. The Glutamine amidotransferase type-1 domain maps to 191 to 376; it reads RIVVMDFGIK…LEEVEAFHGA (186 aa). The active-site Nucleophile is the Cys-266. 5 residues coordinate L-glutamine: Leu-267, Gln-270, Asn-308, Gly-310, and Tyr-311. Catalysis depends on residues His-349 and Glu-351.

The protein belongs to the CarA family. Composed of two chains; the small (or glutamine) chain promotes the hydrolysis of glutamine to ammonia, which is used by the large (or ammonia) chain to synthesize carbamoyl phosphate. Tetramer of heterodimers (alpha,beta)4.

It catalyses the reaction hydrogencarbonate + L-glutamine + 2 ATP + H2O = carbamoyl phosphate + L-glutamate + 2 ADP + phosphate + 2 H(+). It carries out the reaction L-glutamine + H2O = L-glutamate + NH4(+). It participates in amino-acid biosynthesis; L-arginine biosynthesis; carbamoyl phosphate from bicarbonate: step 1/1. Its pathway is pyrimidine metabolism; UMP biosynthesis via de novo pathway; (S)-dihydroorotate from bicarbonate: step 1/3. Its function is as follows. Small subunit of the glutamine-dependent carbamoyl phosphate synthetase (CPSase). CPSase catalyzes the formation of carbamoyl phosphate from the ammonia moiety of glutamine, carbonate, and phosphate donated by ATP, constituting the first step of 2 biosynthetic pathways, one leading to arginine and/or urea and the other to pyrimidine nucleotides. The small subunit (glutamine amidotransferase) binds and cleaves glutamine to supply the large subunit with the substrate ammonia. The chain is Carbamoyl phosphate synthase small chain from Thermus thermophilus (strain ATCC BAA-163 / DSM 7039 / HB27).